The primary structure comprises 196 residues: Pyridoxal 5'-phosphate synthase subunit PdxT (196 aa).

Residue Gly-47 to Ser-49 coordinates L-glutamine. Catalysis depends on Cys-79, which acts as the Nucleophile. L-glutamine-binding positions include Arg-106 and Ile-134–Arg-135. Residues His-170 and Glu-172 each act as charge relay system in the active site.

Belongs to the glutaminase PdxT/SNO family. As to quaternary structure, in the presence of PdxS, forms a dodecamer of heterodimers. Only shows activity in the heterodimer.

It catalyses the reaction aldehydo-D-ribose 5-phosphate + D-glyceraldehyde 3-phosphate + L-glutamine = pyridoxal 5'-phosphate + L-glutamate + phosphate + 3 H2O + H(+). It carries out the reaction L-glutamine + H2O = L-glutamate + NH4(+). Its pathway is cofactor biosynthesis; pyridoxal 5'-phosphate biosynthesis. Its function is as follows. Catalyzes the hydrolysis of glutamine to glutamate and ammonia as part of the biosynthesis of pyridoxal 5'-phosphate. The resulting ammonia molecule is channeled to the active site of PdxS. The polypeptide is Pyridoxal 5'-phosphate synthase subunit PdxT (Bacillus pumilus (strain SAFR-032)).